The following is a 427-amino-acid chain: Homeobox protein knotted-1-like 3 (427 aa).

2 disordered regions span residues 19 to 49 and 272 to 291; these read QTHH…QPAP and TGVS…EDDQ. A compositionally biased stretch (polar residues) spans 272 to 284; it reads TGVSPGEGTSATM. The ELK domain occupies 330-350; it reads ELKHELKQGYKEKIVDIREEI. A DNA-binding region (homeobox; TALE-type) is located at residues 351-414; the sequence is LRKRRAGKLP…NQRKRNWHSN (64 aa).

Belongs to the TALE/KNOX homeobox family. Maximally expressed in sepals, petals and fully expanded leaves. Also expressed in other flower organs and in developing leaves. Low level expression in stem internodes.

It is found in the nucleus. This chain is Homeobox protein knotted-1-like 3, found in Malus domestica (Apple).